The primary structure comprises 301 residues: J domain-containing protein 1 (301 aa).

Residues threonine 58–arginine 150 form the J domain. Residues tryptophan 208–alanine 228 traverse the membrane as a helical segment.

This sequence belongs to the DnaJ family.

Its subcellular location is the mitochondrion membrane. In terms of biological role, probable chaperone. This is J domain-containing protein 1 (JID1) from Saccharomyces cerevisiae (strain ATCC 204508 / S288c) (Baker's yeast).